A 204-amino-acid chain; its full sequence is Imidazoleglycerol-phosphate dehydratase (204 aa).

This sequence belongs to the imidazoleglycerol-phosphate dehydratase family.

The protein localises to the cytoplasm. The enzyme catalyses D-erythro-1-(imidazol-4-yl)glycerol 3-phosphate = 3-(imidazol-4-yl)-2-oxopropyl phosphate + H2O. It participates in amino-acid biosynthesis; L-histidine biosynthesis; L-histidine from 5-phospho-alpha-D-ribose 1-diphosphate: step 6/9. The chain is Imidazoleglycerol-phosphate dehydratase from Corynebacterium jeikeium (strain K411).